The sequence spans 121 residues: Prefoldin subunit beta (121 aa).

The protein belongs to the prefoldin subunit beta family. In terms of assembly, heterohexamer of two alpha and four beta subunits.

The protein resides in the cytoplasm. Molecular chaperone capable of stabilizing a range of proteins. Seems to fulfill an ATP-independent, HSP70-like function in archaeal de novo protein folding. This Methanoculleus marisnigri (strain ATCC 35101 / DSM 1498 / JR1) protein is Prefoldin subunit beta.